Reading from the N-terminus, the 444-residue chain is Tubulin beta chain (444 aa).

An MREI motif motif is present at residues 1 to 4; sequence MREI. GTP-binding residues include Gln11, Glu69, Ser138, Gly142, Thr143, Gly144, Asn204, and Asn226. A Mg(2+)-binding site is contributed by Glu69. Residues 421–444 are disordered; the sequence is EYQQYQDATAEEEEDFNEEAEEEA. A compositionally biased stretch (acidic residues) spans 429 to 444; sequence TAEEEEDFNEEAEEEA. The residue at position 438 (Glu438) is a 5-glutamyl polyglutamate.

The protein belongs to the tubulin family. In terms of assembly, dimer of alpha and beta chains. A typical microtubule is a hollow water-filled tube with an outer diameter of 25 nm and an inner diameter of 15 nM. Alpha-beta heterodimers associate head-to-tail to form protofilaments running lengthwise along the microtubule wall with the beta-tubulin subunit facing the microtubule plus end conferring a structural polarity. Microtubules usually have 13 protofilaments but different protofilament numbers can be found in some organisms and specialized cells. Mg(2+) serves as cofactor. In terms of processing, some glutamate residues at the C-terminus are polyglycylated, resulting in polyglycine chains on the gamma-carboxyl group. Glycylation is mainly limited to tubulin incorporated into axonemes (cilia and flagella) whereas glutamylation is prevalent in neuronal cells, centrioles, axonemes, and the mitotic spindle. Both modifications can coexist on the same protein on adjacent residues, and lowering polyglycylation levels increases polyglutamylation, and reciprocally. The precise function of polyglycylation is still unclear. Post-translationally, some glutamate residues at the C-terminus are polyglutamylated, resulting in polyglutamate chains on the gamma-carboxyl group. Polyglutamylation plays a key role in microtubule severing by spastin (SPAST). SPAST preferentially recognizes and acts on microtubules decorated with short polyglutamate tails: severing activity by SPAST increases as the number of glutamates per tubulin rises from one to eight, but decreases beyond this glutamylation threshold.

It is found in the cytoplasm. The protein resides in the cytoskeleton. Its function is as follows. Tubulin is the major constituent of microtubules, a cylinder consisting of laterally associated linear protofilaments composed of alpha- and beta-tubulin heterodimers. Microtubules grow by the addition of GTP-tubulin dimers to the microtubule end, where a stabilizing cap forms. Below the cap, tubulin dimers are in GDP-bound state, owing to GTPase activity of alpha-tubulin. The chain is Tubulin beta chain (tubb) from Xenopus laevis (African clawed frog).